Reading from the N-terminus, the 427-residue chain is WD repeat and SOCS box-containing protein 1 (427 aa).

WD repeat units follow at residues 129–170 (SRSI…LLLN), 173–213 (DHTD…NMVK), 217–256 (GHPN…LIRK), 259–298 (GHHN…ILLE), and 314–353 (ANDR…PQAV). The 49-residue stretch at 379-427 (SVHFWECPRSIASLQHLCRMALRRVKTTQQVEALPVPMPLRDFLTYRVV) folds into the SOCS box domain.

Component of a probable ECS E3 ubiquitin-protein ligase complex that contains the Elongin BC complex.

Its pathway is protein modification; protein ubiquitination. Probable substrate-recognition component of a SCF-like ECS (Elongin-Cullin-SOCS-box protein) E3 ubiquitin-protein ligase complex which mediates the ubiquitination and subsequent proteasomal degradation of target proteins. The protein is WD repeat and SOCS box-containing protein 1 (wsb1) of Takifugu rubripes (Japanese pufferfish).